Consider the following 1005-residue polypeptide: Ephrin type-A receptor 8 (1005 aa).

The first 27 residues, 1–27 (MAPARGRLPPALWVVTAAAAAATCVSA), serve as a signal peptide directing secretion. The Extracellular portion of the chain corresponds to 28 to 542 (ARGEVNLLDT…KPRPRYDTRT (515 aa)). One can recognise an Eph LBD domain in the interval 31–209 (EVNLLDTSTI…YYKKCPAMVR (179 aa)). Fibronectin type-III domains are found at residues 328–438 (PPSA…TNQA) and 439–534 (APSQ…TGKP). N-linked (GlcNAc...) asparagine glycans are attached at residues asparagine 340, asparagine 407, and asparagine 432. Residues 543–563 (IVWICLTLITGLVVLLLLLIC) form a helical membrane-spanning segment. The segment at 564-570 (KKRHCGY) is mediates interaction with ANKS1A and ANKS1B. The Cytoplasmic segment spans residues 564–1005 (KKRHCGYSKA…TSTQGPRRHL (442 aa)). The tract at residues 589 to 644 (APPPVFLPLHHPPGKLPEPQFYAEPHTYEEPGRAGRSFTREIEASRIHIEKIIGSG) is mediates interaction with PIK3CG and required for endocytosis. Tyrosine 616 bears the Phosphotyrosine; by autocatalysis mark. Residues 635-896 (IHIEKIIGSG…QIVSVLDALI (262 aa)) enclose the Protein kinase domain. Residues 641 to 649 (IGSGDSGEV) and lysine 667 contribute to the ATP site. The Proton acceptor role is filled by aspartate 760. Position 839 is a phosphotyrosine; by autocatalysis (tyrosine 839). An SAM domain is found at 930 to 994 (GGGLTVGDWL…LGSIQTMRAQ (65 aa)). Residues 1003–1005 (RHL) carry the PDZ-binding motif.

Belongs to the protein kinase superfamily. Tyr protein kinase family. Ephrin receptor subfamily. In terms of assembly, heterotetramer upon binding of the ligand. The heterotetramer is composed of an ephrin dimer and a receptor dimer. Oligomerization is probably required to induce biological responses. May also form heterodimers with other ephrin receptors. Interacts with FYN; possible downstream effector of EPHA8 in regulation of cell adhesion. Interacts with PIK3CG; regulates integrin-mediated cell adhesion to substrate. Interacts with TIAM1; regulates clathrin-mediated endocytosis of EPHA8. Interacts with ANKS1A and ANKS1B; EPHA8 kinase activity-independent but stimulated by EPHA8 ubiquitination. Phosphorylated. Phosphorylation is stimulated upon binding of its ligands including EFNA2, EFNA3 and EFNA5. Autophosphorylation on Tyr-616 is critical for association with FYN. Autophosphorylation on Tyr-839 modulates tyrosine kinase activity. Post-translationally, ubiquitinated. Ubiquitination by CBL regulates the receptor stability and activity through proteasomal degradation. ANKS1A prevents ubiquitination and degradation.

It is found in the cell membrane. It localises to the cell projection. The protein resides in the early endosome membrane. The enzyme catalyses L-tyrosyl-[protein] + ATP = O-phospho-L-tyrosyl-[protein] + ADP + H(+). Functionally, receptor tyrosine kinase which binds promiscuously GPI-anchored ephrin-A family ligands residing on adjacent cells, leading to contact-dependent bidirectional signaling into neighboring cells. The signaling pathway downstream of the receptor is referred to as forward signaling while the signaling pathway downstream of the ephrin ligand is referred to as reverse signaling. The GPI-anchored ephrin-A EFNA2, EFNA3, and EFNA5 are able to activate EPHA8 through phosphorylation. With EFNA5 may regulate integrin-mediated cell adhesion and migration on fibronectin substrate but also neurite outgrowth. During development of the nervous system also plays a role in axon guidance. Downstream effectors of the EPHA8 signaling pathway include FYN which promotes cell adhesion upon activation by EPHA8 and the MAP kinases in the stimulation of neurite outgrowth. The polypeptide is Ephrin type-A receptor 8 (EPHA8) (Homo sapiens (Human)).